The following is a 156-amino-acid chain: Cyclic pyranopterin monophosphate synthase (156 aa).

Substrate contacts are provided by residues 75–77 (LCH) and 111–112 (ME). Aspartate 126 is a catalytic residue.

This sequence belongs to the MoaC family. In terms of assembly, homohexamer; trimer of dimers.

It catalyses the reaction (8S)-3',8-cyclo-7,8-dihydroguanosine 5'-triphosphate = cyclic pyranopterin phosphate + diphosphate. It participates in cofactor biosynthesis; molybdopterin biosynthesis. Functionally, catalyzes the conversion of (8S)-3',8-cyclo-7,8-dihydroguanosine 5'-triphosphate to cyclic pyranopterin monophosphate (cPMP). The protein is Cyclic pyranopterin monophosphate synthase of Caulobacter sp. (strain K31).